The sequence spans 227 residues: Type II restriction enzyme ScaI (227 aa).

A disordered region spans residues 12 to 35; that stretch reads EARVGTRTGGPAMRPKTSDSPYFG.

It carries out the reaction Endonucleolytic cleavage of DNA to give specific double-stranded fragments with terminal 5'-phosphates.. A P subtype restriction enzyme that recognizes the double-stranded sequence 5'-AGTACT-3' and cleaves after T-3. The protein is Type II restriction enzyme ScaI of Streptomyces caespitosus.